A 65-amino-acid chain; its full sequence is DNA gyrase inhibitor YacG (65 aa).

C8, C11, C27, and C31 together coordinate Zn(2+). Positions 43–65 (SYRIPDTGKDSEKQENDPSGSEK) are disordered. The span at 48–65 (DTGKDSEKQENDPSGSEK) shows a compositional bias: basic and acidic residues.

This sequence belongs to the DNA gyrase inhibitor YacG family. Interacts with GyrB. The cofactor is Zn(2+).

Functionally, inhibits all the catalytic activities of DNA gyrase by preventing its interaction with DNA. Acts by binding directly to the C-terminal domain of GyrB, which probably disrupts DNA binding by the gyrase. The polypeptide is DNA gyrase inhibitor YacG (Nitrosospira multiformis (strain ATCC 25196 / NCIMB 11849 / C 71)).